The chain runs to 184 residues: uncharacterized protein (184 aa).

The protein belongs to the PhzF family.

It is found in the cytoplasm. The protein localises to the nucleus. This is an uncharacterized protein from Schizosaccharomyces pombe (strain 972 / ATCC 24843) (Fission yeast).